Reading from the N-terminus, the 555-residue chain is Formate--tetrahydrofolate ligase (555 aa).

65 to 72 (TPAGEGKT) provides a ligand contact to ATP.

The protein belongs to the formate--tetrahydrofolate ligase family.

The enzyme catalyses (6S)-5,6,7,8-tetrahydrofolate + formate + ATP = (6R)-10-formyltetrahydrofolate + ADP + phosphate. It participates in one-carbon metabolism; tetrahydrofolate interconversion. This chain is Formate--tetrahydrofolate ligase, found in Thermoanaerobacter sp. (strain X514).